A 98-amino-acid polypeptide reads, in one-letter code: Alpha-defensin 1 (98 aa).

An N-terminal signal peptide occupies residues 1–19 (MRTLTLLTALLLLALQVQT). The propeptide occupies 20 to 63 (QSLEETADQVPAQDQPGAEAQDITISFAGDERSAREASKSLIGT). Intrachain disulfides connect cysteine 66–cysteine 96, cysteine 68–cysteine 84, and cysteine 74–cysteine 95.

This sequence belongs to the alpha-defensin family. As to expression, paneth cells of the small bowel.

It localises to the secreted. In terms of biological role, has broad-spectrum antimicrobial properties. The antimicrobial activity decreases in the present of salt in vitro. Binds anionic phospholipids, which leads to the aggregation of liposomes in vitro. Membrane permeabilization of the target cells is an essential part of the peptide's mode of antimicrobial activity. No hemolytic activity against sheep or horse erythrocytes. Has antibacterial activity against the bacterial horse pathogens Gram-positive R.equi ATCC 33701 P(-) (minimum bactericidal concentration or MBC=5 ug/ml) and R.equi ATCC 33701 P(+) (MBC=5 ug/ml), which are resistant against beta-lactam antibiotics. Also has antibacterial activity against highly infectious wild-type strain R.equi 85F P(+) (MBC=5 ug/ml), S.equi subsp. equi (MBC=5 ug/ml), S.equi subsp. zooepidemicus (MBC=5 ug/ml), S.dysgalactiae subsp. equisimilis (MBC=10 ug/ml), S.choleraesuis subsp. choleraesuis serovar Typhimurium (MBC=10 ug/ml), and P.multocida subsp. multocida (MBC=&gt;10 ug/ml). Probably contributes to the antimicrobial barrier function of the small bowel mucosa. The chain is Alpha-defensin 1 from Equus caballus (Horse).